An 83-amino-acid chain; its full sequence is Cytochrome b559 subunit alpha (83 aa).

Residues 22–36 (VIHAVTLPAIFLAGF) form a helical membrane-spanning segment. His-24 contributes to the heme binding site.

Belongs to the PsbE/PsbF family. Heterodimer of an alpha subunit and a beta subunit. PSII is composed of 1 copy each of membrane proteins PsbA, PsbB, PsbC, PsbD, PsbE, PsbF, PsbH, PsbI, PsbJ, PsbK, PsbL, PsbM, PsbT, PsbX, PsbY, PsbZ, Psb30/Ycf12, peripheral proteins PsbO, CyanoQ (PsbQ), PsbU, PsbV and a large number of cofactors. It forms dimeric complexes. Requires heme b as cofactor.

The protein resides in the cellular thylakoid membrane. Its function is as follows. This b-type cytochrome is tightly associated with the reaction center of photosystem II (PSII). PSII is a light-driven water:plastoquinone oxidoreductase that uses light energy to abstract electrons from H(2)O, generating O(2) and a proton gradient subsequently used for ATP formation. It consists of a core antenna complex that captures photons, and an electron transfer chain that converts photonic excitation into a charge separation. This chain is Cytochrome b559 subunit alpha, found in Synechococcus sp. (strain RCC307).